We begin with the raw amino-acid sequence, 220 residues long: Ribosomal RNA large subunit methyltransferase E (220 aa).

Gly-60, Trp-62, Asp-92, Asp-108, and Asp-133 together coordinate S-adenosyl-L-methionine. Lys-173 serves as the catalytic Proton acceptor.

This sequence belongs to the class I-like SAM-binding methyltransferase superfamily. RNA methyltransferase RlmE family.

It is found in the cytoplasm. The enzyme catalyses uridine(2552) in 23S rRNA + S-adenosyl-L-methionine = 2'-O-methyluridine(2552) in 23S rRNA + S-adenosyl-L-homocysteine + H(+). Specifically methylates the uridine in position 2552 of 23S rRNA at the 2'-O position of the ribose in the fully assembled 50S ribosomal subunit. The chain is Ribosomal RNA large subunit methyltransferase E from Paraburkholderia phymatum (strain DSM 17167 / CIP 108236 / LMG 21445 / STM815) (Burkholderia phymatum).